Here is a 558-residue protein sequence, read N- to C-terminus: MANQGMGPIMVLNSKTQRSTGRQAQLGNIQAARAVADIIRSTLGPRSMLKMLLDPMGGIVITNDGNCILREVDVSHPTAKSMIELSRAHDEEVGDGTTSVIILAGEMLINAEPFVRTNIHPTIIVRGYNYALQEALTICEEWALVVDVHDSERVKSLVQSCIGAKFSSRWNDIMIDMALKAVLTVSRESRTPSFTPEANDVYAQKMEVDIKRYAKVEKIPGGEISDCAVLSGVMFNKDVTHSKMRRRIENPRILLLDTPLEYKKGESQTNVEITDEEDWNTLLKMEEEYVENMCMEIIAFKPDIVITEKGVSDLAQHYFAKANITAFRRLRKTDNNRVARATGATIVSRTDEIRESDIGTGCGLFEMRKIGEEYFAFFEECKDPKACTIILRGGSKDVLNEIERNLTDAMQVVRNVVFDPRLLPGGGATEMAVSVGLRKAGLKLEGIQQGPFLAVGDAMEVIPRTLAQNCGVSVIRTVTQLRAKHAAAYEDSETSGNGTFPKCNWGIDGTTGKLVDMEEFGVWEPFSVKVQTIKTAVESACMILRIDDIVSGSKKKGY.

Cysteines 381 and 387 form a disulfide.

Belongs to the TCP-1 chaperonin family. As to quaternary structure, heterooligomeric complex of about 850 to 900 kDa that forms two stacked rings, 12 to 16 nm in diameter.

It localises to the cytoplasm. Molecular chaperone; assists the folding of proteins upon ATP hydrolysis. Known to play a role, in vitro, in the folding of actin and tubulin. In Thalassiosira weissflogii (Marine diatom), this protein is T-complex protein 1 subunit gamma.